Here is a 61-residue protein sequence, read N- to C-terminus: Metallothionein-2 (61 aa).

Position 1 is an N-acetylmethionine (Met1). Positions Met1 to Cys29 are beta. Cys5, Cys7, Cys13, Cys15, Cys19, Cys21, Cys24, Cys26, Cys29, Cys33, Cys34, Cys36, Cys37, Cys41, Cys44, Cys48, Cys50, and Cys57 together coordinate a divalent metal cation. The segment at Lys30 to Ala61 is alpha. Ser58 carries the phosphoserine modification. Residues Cys59 and Cys60 each contribute to the a divalent metal cation site.

The protein belongs to the metallothionein superfamily. Type 1 family. As to quaternary structure, interacts with EOLA1.

Functionally, metallothioneins have a high content of cysteine residues that bind various heavy metals; these proteins are transcriptionally regulated by both heavy metals and glucocorticoids. This chain is Metallothionein-2 (MT2A), found in Canis lupus familiaris (Dog).